The following is a 363-amino-acid chain: Phosphoserine aminotransferase (363 aa).

Arg-42 serves as a coordination point for L-glutamate. Residues 76–77 (GR), Trp-102, Thr-156, Asp-175, and Gln-198 each bind pyridoxal 5'-phosphate. The residue at position 199 (Lys-199) is an N6-(pyridoxal phosphate)lysine. Residue 240 to 241 (NT) coordinates pyridoxal 5'-phosphate.

It belongs to the class-V pyridoxal-phosphate-dependent aminotransferase family. SerC subfamily. As to quaternary structure, homodimer. It depends on pyridoxal 5'-phosphate as a cofactor.

It localises to the cytoplasm. The enzyme catalyses O-phospho-L-serine + 2-oxoglutarate = 3-phosphooxypyruvate + L-glutamate. It carries out the reaction 4-(phosphooxy)-L-threonine + 2-oxoglutarate = (R)-3-hydroxy-2-oxo-4-phosphooxybutanoate + L-glutamate. It participates in amino-acid biosynthesis; L-serine biosynthesis; L-serine from 3-phospho-D-glycerate: step 2/3. Its pathway is cofactor biosynthesis; pyridoxine 5'-phosphate biosynthesis; pyridoxine 5'-phosphate from D-erythrose 4-phosphate: step 3/5. Functionally, catalyzes the reversible conversion of 3-phosphohydroxypyruvate to phosphoserine and of 3-hydroxy-2-oxo-4-phosphonooxybutanoate to phosphohydroxythreonine. This Shewanella sp. (strain MR-7) protein is Phosphoserine aminotransferase.